Here is a 752-residue protein sequence, read N- to C-terminus: Cytosolic phospholipase A2 (752 aa).

Residues 1 to 178 form a phospholipid binding region; it reads MSFIDPYQHI…MKKLLGPKKS (178 aa). Ser2 carries the phosphoserine modification. Positions 6–122 constitute a C2 domain; sequence PYQHIIVEHQ…KVGEKKEVPF (117 aa). Residues Asp40, Thr41, Asp43, Asn65, Asp93, Ala94, and Asn95 each coordinate Ca(2+). The PLA2c domain occupies 140–740; sequence SCPDLRFSMA…SNVEARKFFN (601 aa). Ser228 functions as the Nucleophile in the catalytic mechanism. Residue Thr268 is modified to Phosphothreonine. The tract at residues 427–457 is disordered; the sequence is KHIVSNDSSDSDDEAQGPKGTENEDAEREYQ. Residues Ser434, Ser435, and Ser437 each carry the phosphoserine modification. At Ser505 the chain carries Phosphoserine; by MAPK. 2 positions are modified to phosphoserine: Ser511 and Ser515. Residue Lys541 forms a Glycyl lysine isopeptide (Lys-Gly) (interchain with G-Cter in SUMO2) linkage. Asp549 acts as the Proton acceptor in catalysis. Residue Lys606 forms a Glycyl lysine isopeptide (Lys-Gly) (interchain with G-Cter in SUMO2) linkage. 2 positions are modified to phosphoserine: Ser727 and Ser729.

Interacts with KAT5. Post-translationally, phosphorylated at both Ser-505 and Ser-727 in response to mitogenic stimuli. In terms of tissue distribution, in brain tissue, expressed in low levels in olfactory mitral and granule cells, in hippocampal pyramidal cells and in dentate and cerebellar granule cells.

The protein resides in the cytoplasm. Its subcellular location is the golgi apparatus membrane. It is found in the nucleus envelope. It catalyses the reaction a 1,2-diacyl-sn-glycero-3-phosphocholine + H2O = a 1-acyl-sn-glycero-3-phosphocholine + a fatty acid + H(+). The enzyme catalyses a 1-O-alkyl-2-acyl-sn-glycero-3-phosphocholine + H2O = a 1-O-alkyl-sn-glycero-3-phosphocholine + a fatty acid + H(+). The catalysed reaction is a 1-acyl-sn-glycero-3-phosphocholine + H2O = sn-glycerol 3-phosphocholine + a fatty acid + H(+). It carries out the reaction 1-hexadecanoyl-2-(5Z,8Z,11Z,14Z-eicosatetraenoyl)-sn-glycero-3-phosphocholine + H2O = 1-hexadecanoyl-sn-glycero-3-phosphocholine + (5Z,8Z,11Z,14Z)-eicosatetraenoate + H(+). It catalyses the reaction 1,2-di-(5Z,8Z,11Z,14Z-eicosatetraenoyl)-sn-glycero-3-phosphocholine + H2O = 1-(5Z,8Z,11Z,14Z-eicosatetraenoyl)-sn-glycero-3-phosphocholine + (5Z,8Z,11Z,14Z)-eicosatetraenoate + H(+). The enzyme catalyses 1-octadecanoyl-2-(5Z,8Z,11Z,14Z-eicosatetraenoyl)-sn-glycero-3-phosphocholine + H2O = 1-octadecanoyl-sn-glycero-3-phosphocholine + (5Z,8Z,11Z,14Z)-eicosatetraenoate + H(+). The catalysed reaction is 1-hexadecanoyl-2-(9Z,12Z-octadecadienoyl)-sn-glycero-3-phosphocholine + H2O = (9Z,12Z)-octadecadienoate + 1-hexadecanoyl-sn-glycero-3-phosphocholine + H(+). It carries out the reaction 1-octadecanoyl-2-(9Z,12Z,15Z-octadecatrienoyl)-sn-glycero-3-phosphocholine + H2O = (9Z,12Z,15Z)-octadecatrienoate + 1-octadecanoyl-sn-glycero-3-phosphocholine + H(+). It catalyses the reaction 1-(5Z,8Z,11Z,14Z-eicosatetraenoyl)-2-hexadecanoyl-sn-glycero-3-phosphocholine + H2O = 1-(5Z,8Z,11Z,14Z-eicosatetraenoyl)-sn-glycero-3-phosphocholine + hexadecanoate + H(+). The enzyme catalyses 1-O-hexadecyl-2-(5Z,8Z,11Z,14Z)-eicosatetraenoyl-sn-glycero-3-phosphocholine + H2O = 1-O-hexadecyl-sn-glycero-3-phosphocholine + (5Z,8Z,11Z,14Z)-eicosatetraenoate + H(+). The catalysed reaction is 1,2-di-(9Z-octadecenoyl)-sn-glycero-3-phospho-(1'-sn-glycerol) + H2O = 1-(9Z-octadecenoyl)-sn-glycero-3-phospho-(1'-sn-glycerol) + (9Z)-octadecenoate + H(+). It carries out the reaction 1-octadecanoyl-2-(5Z,8Z,11Z,14Z-eicosatetraenoyl)-sn-glycero-3-phosphate + H2O = 1-octadecanoyl-sn-glycero-3-phosphate + (5Z,8Z,11Z,14Z)-eicosatetraenoate + H(+). It catalyses the reaction 1-hexadecanoyl-sn-glycero-3-phosphocholine + H2O = sn-glycerol 3-phosphocholine + hexadecanoate + H(+). The enzyme catalyses 2-(prostaglandin E2)-sn-glycero-3-phosphoethanolamine + H2O = sn-glycero-3-phosphoethanolamine + prostaglandin E2 + H(+). The catalysed reaction is 2-[(15S)-hydroxy-(5Z,8Z,11Z,13E)-eicosatetraenoyl]-sn-glycero-3-phosphocholine + H2O = (15S)-hydroxy-(5Z,8Z,11Z,13E)-eicosatetraenoate + sn-glycerol 3-phosphocholine + H(+). It carries out the reaction 2-[(15R)-hydroxy-(5Z,8Z,11Z,13E)-eicosatetraenoyl]-sn-glycero-3-phosphocholine + H2O = (15R)-hydroxy-(5Z,8Z,11Z,13E)-eicosatetraenoate + sn-glycerol 3-phosphocholine + H(+). It catalyses the reaction 2-(prostaglandin E2)-sn-glycero-3-phosphocholine + H2O = prostaglandin E2 + sn-glycerol 3-phosphocholine + H(+). The enzyme catalyses 2-[(11R)-hydroxy-(5Z,8Z,12E,14Z)-eicosatetraenoyl]-sn-glycero-3-phosphocholine + H2O = (11R)-hydroxy-(5Z,8Z,12E,14Z)-eicosatetraenoate + sn-glycerol 3-phosphocholine + H(+). The catalysed reaction is 1-(5Z,8Z,11Z,14Z-eicosatetraenoyl)-2-O-hexadecyl-sn-glycero-3-phosphocholine + H2O = 2-O-hexadecyl-sn-glycero-3-phosphocholine + (5Z,8Z,11Z,14Z)-eicosatetraenoate + H(+). It carries out the reaction 1-octadecanoyl-2-(5Z,8Z,11Z,14Z-eicosatetraenoyl)-sn-glycero-3-phosphocholine + glycerol = 1-(5Z,8Z,11Z,14Z-eicosatetraenoyl)-glycerol + 1-octadecanoyl-sn-glycero-3-phosphocholine. It catalyses the reaction 1-octadecanoyl-2-(9Z,12Z,15Z-octadecatrienoyl)-sn-glycero-3-phosphocholine + glycerol = 1-(9Z,12Z,15Z-octadecatrienoyl)-glycerol + 1-octadecanoyl-sn-glycero-3-phosphocholine. It functions in the pathway lipid metabolism; arachidonate metabolism. It participates in membrane lipid metabolism; glycerophospholipid metabolism. The protein operates within lipid metabolism; prostaglandin biosynthesis. Its pathway is lipid metabolism; leukotriene B4 biosynthesis. With respect to regulation, activated by cytosolic calcium, which is necessary for binding to membrane lipids. Activated by phosphorylation in response to mitogenic stimuli. Has primarily calcium-dependent phospholipase and lysophospholipase activities, with a major role in membrane lipid remodeling and biosynthesis of lipid mediators of the inflammatory response. Plays an important role in embryo implantation and parturition through its ability to trigger prostanoid production. Preferentially hydrolyzes the ester bond of the fatty acyl group attached at sn-2 position of phospholipids (phospholipase A2 activity). Selectively hydrolyzes sn-2 arachidonoyl group from membrane phospholipids, providing the precursor for eicosanoid biosynthesis via the cyclooxygenase pathway. In an alternative pathway of eicosanoid biosynthesis, hydrolyzes sn-2 fatty acyl chain of eicosanoid lysophopholipids to release free bioactive eicosanoids. Hydrolyzes the ester bond of the fatty acyl group attached at sn-1 position of phospholipids (phospholipase A1 activity) only if an ether linkage rather than an ester linkage is present at the sn-2 position. This hydrolysis is not stereospecific. Has calcium-independent phospholipase A2 and lysophospholipase activities in the presence of phosphoinositides. Has O-acyltransferase activity. Catalyzes the transfer of fatty acyl chains from phospholipids to a primary hydroxyl group of glycerol (sn-1 or sn-3), potentially contributing to monoacylglycerol synthesis. The sequence is that of Cytosolic phospholipase A2 (Pla2g4a) from Rattus norvegicus (Rat).